A 483-amino-acid polypeptide reads, in one-letter code: Phloretin 2'-O-glucosyltransferase (483 aa).

Catalysis depends on histidine 15, which acts as the Proton acceptor. Histidine 15 contacts an anthocyanidin. Residue aspartate 118 is the Charge relay of the active site. Residues threonine 140, alanine 360, glutamine 362, histidine 377, tryptophan 380, asparagine 381, serine 382, and glutamate 385 each coordinate UDP-alpha-D-glucose. Alanine 400 is a binding site for an anthocyanidin. UDP-alpha-D-glucose is bound by residues glutamate 401 and glutamine 402.

This sequence belongs to the UDP-glycosyltransferase family.

It catalyses the reaction phloretin + UDP-alpha-D-glucose = phlorizin + UDP + H(+). Its function is as follows. Glycosyltransferase that possesses phloretin 2'-O-glycosyltransferase activity. Converts phloretin to phlorizin (phloretin 2'-O-glucoside), a potent antioxidant. Is specific for phloretin and does not possess glycosyltransferase activity toward naringenin, naringenin chalcone, eriodictyol, eriodictyol chalcone, apigenin, luteolin, kaempferol, quercetin, isoliquiritigenin, butein, caffeic acid, 2-coumaric acid, 3-coumaric acid, 3-hydroxybenzoic acid, 3,4-dihydroxybenzoic acid and 3,4-dihydroxyhydrocinnamic acid. Can glycosylate phloretin in the presence of UDP-glucose, UDP-xylose and UDP-galactose. The polypeptide is Phloretin 2'-O-glucosyltransferase (Pyrus communis (Pear)).